We begin with the raw amino-acid sequence, 341 residues long: Farnesyl pyrophosphate synthase 2 (341 aa).

Positions 46, 49, and 85 each coordinate isopentenyl diphosphate. Mg(2+) is bound by residues Asp92 and Asp96. Dimethylallyl diphosphate is bound at residue Arg101. Arg102 is a binding site for isopentenyl diphosphate. Dimethylallyl diphosphate is bound by residues Lys189, Thr190, Gln228, Lys245, and Lys254.

Belongs to the FPP/GGPP synthase family. Mg(2+) serves as cofactor. Mainly expressed in trichomes, roots and flowers, and, to a lower extent, in leaves and stems.

It localises to the cytoplasm. Its subcellular location is the nucleus. The enzyme catalyses isopentenyl diphosphate + dimethylallyl diphosphate = (2E)-geranyl diphosphate + diphosphate. It carries out the reaction isopentenyl diphosphate + (2E)-geranyl diphosphate = (2E,6E)-farnesyl diphosphate + diphosphate. The protein operates within isoprenoid biosynthesis; farnesyl diphosphate biosynthesis; farnesyl diphosphate from geranyl diphosphate and isopentenyl diphosphate: step 1/1. It functions in the pathway sesquiterpene biosynthesis. Its pathway is isoprenoid biosynthesis; geranyl diphosphate biosynthesis; geranyl diphosphate from dimethylallyl diphosphate and isopentenyl diphosphate: step 1/1. Its function is as follows. Catalyzes the sequential condensation of isopentenyl pyrophosphate with the allylic pyrophosphates, dimethylallyl pyrophosphate, and then with the resultant geranylpyrophosphate to the ultimate product farnesyl pyrophosphate. The chain is Farnesyl pyrophosphate synthase 2 from Cannabis sativa (Hemp).